The primary structure comprises 125 residues: Apoptosis inhibitor Rv3655c (125 aa).

An N-terminal signal peptide occupies residues 1 to 33 (MEAALAIATLVLVLVLCLAGVTAVSMQVRCIDA).

As to quaternary structure, interacts with human E3 ubiquitin-protein ligase RNF213.

Its subcellular location is the secreted. The protein resides in the host cytoplasm. In terms of biological role, effector protein that participates in the suppression of macrophage apoptosis by blocking the extrinsic pathway. Interferes with caspase-8 activation and binds to the host E3 ubiquitin-protein ligase RNF213, whose fusion partners have anti-apoptotic function. The polypeptide is Apoptosis inhibitor Rv3655c (Mycobacterium tuberculosis (strain ATCC 25618 / H37Rv)).